The primary structure comprises 402 residues: Omega-3 fatty acid desaturase fat-1 (402 aa).

4 consecutive transmembrane segments (helical) span residues 79–99 (LVQD…FEYF), 101–121 (LFGY…LFVV), 235–255 (CVIS…IAGS), and 260–280 (FWYY…VTYL).

This sequence belongs to the fatty acid desaturase type 1 family.

It is found in the membrane. It catalyses the reaction (9Z,12Z)-octadecadienoyl-CoA + 2 Fe(II)-[cytochrome b5] + O2 + 2 H(+) = (9Z,12Z,15Z)-octadecatrienoyl-CoA + 2 Fe(III)-[cytochrome b5] + 2 H2O. It carries out the reaction (8Z,11Z,14Z)-eicosatrienoyl-CoA + 2 Fe(II)-[cytochrome b5] + O2 + 2 H(+) = (8Z,11Z,14Z,17Z)-eicosatetraenoyl-CoA + 2 Fe(III)-[cytochrome b5] + 2 H2O. The catalysed reaction is (5Z,8Z,11Z,14Z)-eicosatetraenoyl-CoA + 2 Fe(II)-[cytochrome b5] + O2 + 2 H(+) = (5Z,8Z,11Z,14Z,17Z)-eicosapentaenoyl-CoA + 2 Fe(III)-[cytochrome b5] + 2 H2O. The enzyme catalyses (7Z,10Z,13Z,16Z)-docosatetraenoyl-CoA + 2 Fe(II)-[cytochrome b5] + O2 + 2 H(+) = (7Z,10Z,13Z,16Z,19Z)-docosapentaenoyl-CoA + 2 Fe(III)-[cytochrome b5] + 2 H2O. It catalyses the reaction (6Z,9Z,12Z)-octadecatrienoyl-CoA + 2 Fe(II)-[cytochrome b5] + O2 + 2 H(+) = (6Z,9Z,12Z,15Z)-octadecatetraenoyl-CoA + 2 Fe(III)-[cytochrome b5] + 2 H2O. It participates in lipid metabolism; polyunsaturated fatty acid biosynthesis. In terms of biological role, omega-3 fatty acid desaturase that recognizes a range of 18- and 20-carbon omega-6 substrates. Introduces a double bond in the fatty acid chain three carbons away from terminal methyl group to biosynthesize n-3 (omega-3) polyunsaturated fatty acids (PUFAs) endogenously (PUFAs are essential for membrane structure and many cellular and physiological processes). Acts on a number of substrates like linoleoyl-CoA ((9Z,12Z)-octadecadienoyl-CoA, 18:2n-6), dihomo-gamma-linolenoyl-CoA ((8Z,11Z,14Z)-eicosatrienoyl-CoA, 20:3n-6), and arachidonoyl-CoA ((5Z,8Z,11Z,14Z)-eicosatetraenoyl-CoA, 20:4n-6), to generate alpha-linolenoyl-CoA ((9Z,12Z,15Z)-octadecatrienoyl-CoA, 18:3n-3), (8Z,11Z,14Z,17Z)-eicosatetraenoyl-CoA (20:4n-3) and (5Z,8Z,11Z,14Z,17Z)-eicosapentaenoyl-CoA (20:5n-3) respectively. Unlike plants, Caenorhabditis elegans desaturases seem to use fatty acyl-CoAs as substrates. In Caenorhabditis elegans, this protein is Omega-3 fatty acid desaturase fat-1 (fat-1).